Reading from the N-terminus, the 148-residue chain is Nucleoside diphosphate kinase (148 aa).

ATP-binding residues include lysine 9, phenylalanine 57, arginine 85, threonine 91, arginine 102, and asparagine 112. Threonine 91 is subject to Phosphothreonine. The active-site Pros-phosphohistidine intermediate is the histidine 115. At serine 122 the chain carries Phosphoserine.

This sequence belongs to the NDK family. As to quaternary structure, homotetramer. The cofactor is Mg(2+).

It is found in the cytoplasm. The enzyme catalyses a 2'-deoxyribonucleoside 5'-diphosphate + ATP = a 2'-deoxyribonucleoside 5'-triphosphate + ADP. The catalysed reaction is a ribonucleoside 5'-diphosphate + ATP = a ribonucleoside 5'-triphosphate + ADP. In terms of biological role, major role in the synthesis of nucleoside triphosphates other than ATP. The ATP gamma phosphate is transferred to the NDP beta phosphate via a ping-pong mechanism, using a phosphorylated active-site intermediate. This chain is Nucleoside diphosphate kinase, found in Oceanobacillus iheyensis (strain DSM 14371 / CIP 107618 / JCM 11309 / KCTC 3954 / HTE831).